A 299-amino-acid chain; its full sequence is S-formylglutathione hydrolase (299 aa).

Residues methionine 1 and histidine 140 each contribute to the Cu cation site. Catalysis depends on charge relay system residues serine 161, aspartate 241, and histidine 276.

The protein belongs to the esterase D family. In terms of assembly, monomer.

It is found in the cytoplasm. It carries out the reaction S-formylglutathione + H2O = formate + glutathione + H(+). Its function is as follows. Serine hydrolase involved in the detoxification of formaldehyde. The chain is S-formylglutathione hydrolase from Saccharomyces cerevisiae (strain ATCC 204508 / S288c) (Baker's yeast).